The sequence spans 227 residues: Cytochrome c oxidase subunit 2 (227 aa).

Residues 1–14 are Mitochondrial intermembrane-facing; that stretch reads MAYPFQLGLQDATS. The chain crosses the membrane as a helical span at residues 15–45; that stretch reads PIMEELLHFHDHTLMIVFLISSLVLYIITLM. At 46 to 59 the chain is on the mitochondrial matrix side; the sequence is LTTKLTHTSTMDAQ. The helical transmembrane segment at 60–87 threads the bilayer; sequence EVETVWTILPAIILVLIALPSLRILYMM. Over 88-227 the chain is Mitochondrial intermembrane; it reads DEINNPSLTV…YFETWSALMV (140 aa). His161, Cys196, Glu198, Cys200, His204, and Met207 together coordinate Cu cation. Glu198 contacts Mg(2+). Tyr218 is subject to Phosphotyrosine.

This sequence belongs to the cytochrome c oxidase subunit 2 family. As to quaternary structure, component of the cytochrome c oxidase (complex IV, CIV), a multisubunit enzyme composed of 14 subunits. The complex is composed of a catalytic core of 3 subunits MT-CO1, MT-CO2 and MT-CO3, encoded in the mitochondrial DNA, and 11 supernumerary subunits COX4I, COX5A, COX5B, COX6A, COX6B, COX6C, COX7A, COX7B, COX7C, COX8 and NDUFA4, which are encoded in the nuclear genome. The complex exists as a monomer or a dimer and forms supercomplexes (SCs) in the inner mitochondrial membrane with NADH-ubiquinone oxidoreductase (complex I, CI) and ubiquinol-cytochrome c oxidoreductase (cytochrome b-c1 complex, complex III, CIII), resulting in different assemblies (supercomplex SCI(1)III(2)IV(1) and megacomplex MCI(2)III(2)IV(2)). Found in a complex with TMEM177, COA6, COX18, COX20, SCO1 and SCO2. Interacts with TMEM177 in a COX20-dependent manner. Interacts with COX20. Interacts with COX16. Cu cation serves as cofactor.

Its subcellular location is the mitochondrion inner membrane. It catalyses the reaction 4 Fe(II)-[cytochrome c] + O2 + 8 H(+)(in) = 4 Fe(III)-[cytochrome c] + 2 H2O + 4 H(+)(out). Component of the cytochrome c oxidase, the last enzyme in the mitochondrial electron transport chain which drives oxidative phosphorylation. The respiratory chain contains 3 multisubunit complexes succinate dehydrogenase (complex II, CII), ubiquinol-cytochrome c oxidoreductase (cytochrome b-c1 complex, complex III, CIII) and cytochrome c oxidase (complex IV, CIV), that cooperate to transfer electrons derived from NADH and succinate to molecular oxygen, creating an electrochemical gradient over the inner membrane that drives transmembrane transport and the ATP synthase. Cytochrome c oxidase is the component of the respiratory chain that catalyzes the reduction of oxygen to water. Electrons originating from reduced cytochrome c in the intermembrane space (IMS) are transferred via the dinuclear copper A center (CU(A)) of subunit 2 and heme A of subunit 1 to the active site in subunit 1, a binuclear center (BNC) formed by heme A3 and copper B (CU(B)). The BNC reduces molecular oxygen to 2 water molecules using 4 electrons from cytochrome c in the IMS and 4 protons from the mitochondrial matrix. The chain is Cytochrome c oxidase subunit 2 (MT-CO2) from Vulpes zerda (Fennec fox).